The following is a 309-amino-acid chain: Protein FdhE homolog (309 aa).

This sequence belongs to the FdhE family.

It is found in the cytoplasm. In terms of biological role, necessary for formate dehydrogenase activity. This is Protein FdhE homolog from Pasteurella multocida (strain Pm70).